We begin with the raw amino-acid sequence, 648 residues long: MSQISLTFPDGNARDYPAGVTAAEVAASIAPSLAKNAISASLDGQHIDLQWPIAASGRIAINTMKDSEPALELIRHDLAHIMARAVQELWPDVKVTIGPVRDQGWFYDFDRAEPFTPEDLGAIEQRMKQIIAARDPVRTEVWDRDRARAHYEAQGEPFKIELLDRIPEGEPIRMYWHGDWQDLCRGPHLQHTGQVPADAFKLTHVAGAYWLGDASRPMLQRIYGVAFRNRDDLKAHLTMLEEAAKRDHRKLGREMELFHFQEEAPGMVFWHPNGWSIYRELEAYMRRRLIRADYKEIKTPQVVDRILWEKSGHWEAYRENMFIVEVDEEGAKEKRINALKPMNCPCHVQVYNQGLKSYRDLPLRLAEFGSCHRYEPSGSMHGLMRVRGFVQDDAHIFCTEDQIEAECAGFIGLLSSVYKDLGFEKFDIKLSTRPDVRVGSDEIWDKAEAALKGAIEHLDLPYEVNPGDGAFYGPKLDFKLTDAIGREWQCGTFQCDFNLPQRLEAEYVGEDGAKHMPVMLHRAVLGSFERFIGILIENYSGKLPLWLAPRQVVVASIVSGADDYVHEVVAALRAAGLRAEADTRNEKINYKVREHSVGKVPVIMAVGLKEVEERSVSIRRLDRQGSESHGLESAIATLRAEATPPDLR.

The TGS domain occupies 1-63 (MSQISLTFPD…AASGRIAINT (63 aa)). The interval 247–544 (DHRKLGREME…LIENYSGKLP (298 aa)) is catalytic. Zn(2+)-binding residues include Cys344, His395, and His521.

Belongs to the class-II aminoacyl-tRNA synthetase family. Homodimer. The cofactor is Zn(2+).

It is found in the cytoplasm. It catalyses the reaction tRNA(Thr) + L-threonine + ATP = L-threonyl-tRNA(Thr) + AMP + diphosphate + H(+). In terms of biological role, catalyzes the attachment of threonine to tRNA(Thr) in a two-step reaction: L-threonine is first activated by ATP to form Thr-AMP and then transferred to the acceptor end of tRNA(Thr). Also edits incorrectly charged L-seryl-tRNA(Thr). In Paracoccus denitrificans (strain Pd 1222), this protein is Threonine--tRNA ligase.